Reading from the N-terminus, the 144-residue chain is Bacilliredoxin BCE_2233 (144 aa).

The protein belongs to the bacilliredoxin family.

In Bacillus cereus (strain ATCC 10987 / NRS 248), this protein is Bacilliredoxin BCE_2233.